Here is a 141-residue protein sequence, read N- to C-terminus: D-aminoacyl-tRNA deacylase (141 aa).

The Gly-cisPro motif, important for rejection of L-amino acids signature appears at 133-134; it reads GP.

This sequence belongs to the DTD family. As to quaternary structure, homodimer.

It is found in the cytoplasm. It catalyses the reaction glycyl-tRNA(Ala) + H2O = tRNA(Ala) + glycine + H(+). It carries out the reaction a D-aminoacyl-tRNA + H2O = a tRNA + a D-alpha-amino acid + H(+). Functionally, an aminoacyl-tRNA editing enzyme that deacylates mischarged D-aminoacyl-tRNAs. Also deacylates mischarged glycyl-tRNA(Ala), protecting cells against glycine mischarging by AlaRS. Acts via tRNA-based rather than protein-based catalysis; rejects L-amino acids rather than detecting D-amino acids in the active site. By recycling D-aminoacyl-tRNA to D-amino acids and free tRNA molecules, this enzyme counteracts the toxicity associated with the formation of D-aminoacyl-tRNA entities in vivo and helps enforce protein L-homochirality. The protein is D-aminoacyl-tRNA deacylase of Nautilia profundicola (strain ATCC BAA-1463 / DSM 18972 / AmH).